The sequence spans 145 residues: Small ribosomal subunit protein eS19 (145 aa).

This sequence belongs to the eukaryotic ribosomal protein eS19 family. As to quaternary structure, part of the 30S ribosomal subunit.

Its function is as follows. May be involved in maturation of the 30S ribosomal subunit. In Methanothermobacter thermautotrophicus (strain ATCC 29096 / DSM 1053 / JCM 10044 / NBRC 100330 / Delta H) (Methanobacterium thermoautotrophicum), this protein is Small ribosomal subunit protein eS19.